A 424-amino-acid polypeptide reads, in one-letter code: Alkaline nuclease (424 aa).

The protein belongs to the baculo-herpesviridae alkaline nuclease family. In terms of assembly, interacts with LEF-3.

The protein resides in the host nucleus. Functionally, may play a role in maturation and encapsidation of viral replicated genome, by promoting DNA homologous recombination. Exhibits endonuclease and 5'-&gt;3' exonuclease activities. The endonuclease activity displays a specificity for ssDNA in vitro. This is Alkaline nuclease (ALK-EXO) from Orgyia pseudotsugata (Douglas-fir tussock moth).